Here is a 193-residue protein sequence, read N- to C-terminus: Putative manganese efflux pump MntP (193 aa).

6 consecutive transmembrane segments (helical) span residues 3 to 23, 41 to 61, 69 to 89, 107 to 127, 130 to 150, and 164 to 184; these read IFAV…VAVV, AAFG…GVSV, DHWI…LSGL, AGRN…AVGL, AILG…CAVI, and LCAL…AIAC.

It belongs to the MntP (TC 9.B.29) family.

It is found in the cell inner membrane. Probably functions as a manganese efflux pump. In Desulfovibrio desulfuricans (strain ATCC 27774 / DSM 6949 / MB), this protein is Putative manganese efflux pump MntP.